A 595-amino-acid polypeptide reads, in one-letter code: Metacaspase-1 (595 aa).

Active-site residues include His411 and Cys466.

The protein belongs to the peptidase C14B family. As to quaternary structure, monomer.

Activated by Ca(2+). In terms of biological role, cysteine protease that cleaves specifically after arginine or lysine residues. The polypeptide is Metacaspase-1 (Plasmodium berghei (strain Anka)).